The sequence spans 168 residues: UPF0134 protein MPN_524 (168 aa).

The protein belongs to the UPF0134 family.

This Mycoplasma pneumoniae (strain ATCC 29342 / M129 / Subtype 1) (Mycoplasmoides pneumoniae) protein is UPF0134 protein MPN_524.